Consider the following 496-residue polypeptide: Glycerol kinase (496 aa).

Thr-11 is a binding site for ADP. Positions 11, 12, and 13 each coordinate ATP. Thr-11 lines the sn-glycerol 3-phosphate pocket. Arg-15 is a binding site for ADP. Residues Arg-81, Glu-82, Tyr-133, and Asp-242 each coordinate sn-glycerol 3-phosphate. Glycerol-binding residues include Arg-81, Glu-82, Tyr-133, Asp-242, and Gln-243. 2 residues coordinate ADP: Thr-264 and Gly-307. ATP-binding residues include Thr-264, Gly-307, Gln-311, and Gly-408. ADP is bound by residues Gly-408 and Asn-412.

Belongs to the FGGY kinase family.

The enzyme catalyses glycerol + ATP = sn-glycerol 3-phosphate + ADP + H(+). The protein operates within polyol metabolism; glycerol degradation via glycerol kinase pathway; sn-glycerol 3-phosphate from glycerol: step 1/1. With respect to regulation, inhibited by fructose 1,6-bisphosphate (FBP). Functionally, key enzyme in the regulation of glycerol uptake and metabolism. Catalyzes the phosphorylation of glycerol to yield sn-glycerol 3-phosphate. The chain is Glycerol kinase from Trichlorobacter lovleyi (strain ATCC BAA-1151 / DSM 17278 / SZ) (Geobacter lovleyi).